Here is a 600-residue protein sequence, read N- to C-terminus: Melanophilin (600 aa).

The RabBD domain occupies 4 to 124; sequence KLDLSKLTDE…IGSLEWYYEH (121 aa). The segment at 64 to 107 adopts an FYVE-type zinc-finger fold; sequence CARCLQPYQLLVNSKRQCLECGLFTCKSCGRVHPEEQGWICDPC. 4 disordered regions span residues 146–277, 390–465, 499–541, and 553–600; these read QGGA…AELC, EELT…LSEL, TVKP…AKAM, and NSLK…AHQS. Basic and acidic residues-rich tracts occupy residues 232-243 and 409-420; these read CSEKAAPHKAEG and KDEKAEPNRDKS. Positions 373 to 496 form a coiled coil; it reads GVRTEADVEE…ESRIAALRAA (124 aa). Residues 558–569 show a composition bias toward basic and acidic residues; that stretch reads QGKDDDSFDRKS.

Binds RAB27A that has been activated by GTP-binding via its N-terminus. Binds MYO5A via its C-terminal coiled coil domain.

It is found in the cytoplasm. Functionally, rab effector protein involved in melanosome transport. Serves as link between melanosome-bound RAB27A and the motor protein MYO5A. This Homo sapiens (Human) protein is Melanophilin (MLPH).